The chain runs to 252 residues: 2-succinyl-6-hydroxy-2,4-cyclohexadiene-1-carboxylate synthase (252 aa).

Belongs to the AB hydrolase superfamily. MenH family. As to quaternary structure, monomer.

The catalysed reaction is 5-enolpyruvoyl-6-hydroxy-2-succinyl-cyclohex-3-ene-1-carboxylate = (1R,6R)-6-hydroxy-2-succinyl-cyclohexa-2,4-diene-1-carboxylate + pyruvate. Its pathway is quinol/quinone metabolism; 1,4-dihydroxy-2-naphthoate biosynthesis; 1,4-dihydroxy-2-naphthoate from chorismate: step 3/7. It functions in the pathway quinol/quinone metabolism; menaquinone biosynthesis. Functionally, catalyzes a proton abstraction reaction that results in 2,5-elimination of pyruvate from 2-succinyl-5-enolpyruvyl-6-hydroxy-3-cyclohexene-1-carboxylate (SEPHCHC) and the formation of 2-succinyl-6-hydroxy-2,4-cyclohexadiene-1-carboxylate (SHCHC). The chain is 2-succinyl-6-hydroxy-2,4-cyclohexadiene-1-carboxylate synthase from Escherichia coli O9:H4 (strain HS).